A 763-amino-acid chain; its full sequence is DNA-binding protein SATB1 (763 aa).

Basic and acidic residues predominate over residues 1–15; it reads MDHLNEATQGKEHSE. A disordered region spans residues 1 to 54; that stretch reads MDHLNEATQGKEHSEMSNNVSDPKGPPAKIARLEQNGSPLGRGRLGSTGAKMQG. Positions 20–40 match the Nuclear localization signal motif; sequence VSDPKGPPAKIARLEQNGSPL. K51 is covalently cross-linked (Glycyl lysine isopeptide (Lys-Gly) (interchain with G-Cter in SUMO2)). Residues 71-172 form the CMP domain; sequence GTMLPVFCVV…VVTLKIQLHS (102 aa). N6-acetyllysine is present on K136. A Protein interaction motif is present at residues 139 to 143; sequence PVPLS. Residues 175-248 enclose the CUTL domain; that stretch reads KLEDLPPEQW…WYKHFKKTKD (74 aa). Residue S185 is modified to Phosphoserine. A nuclear matrix targeting sequence (NMTS) region spans residues 224-278; it reads YYANVSAAKCQEFGRWYKHFKKTKDMMVEMDSLSELSQQGANHVNFGQQPVPGNT. Positions 266–296 are enriched in polar residues; sequence HVNFGQQPVPGNTAEQPPSPAQLSHGSQPSV. The disordered stretch occupies residues 266–307; it reads HVNFGQQPVPGNTAEQPPSPAQLSHGSQPSVRTPLPNLHPGL. 2 DNA-binding regions (CUT) span residues 361–448 and 484–571; these read LEQQ…QDER and NGKP…EQES. Residues Q390, 400-410, and N425 contribute to the DNA site; that span reads RTQGLLSEILR. Residues 591 to 607 show a composition bias toward low complexity; it reads QIQQQQQQQQQQQQQQQ. A disordered region spans residues 591–649; sequence QIQQQQQQQQQQQQQQQAPPPPQPQQQPQTGPRLPPRQPTVASPAESDEENRQKTRPRT. A Phosphoserine modification is found at S637. The homeobox DNA-binding region spans 645–704; that stretch reads TRPRTKISVEALGILQSFIQDVGLYPDEEAIQTLSAQLDLPKYTIIKFFQNQRYYLKHHG. K744 is covalently cross-linked (Glycyl lysine isopeptide (Lys-Gly) (interchain with G-Cter in SUMO)).

This sequence belongs to the CUT homeobox family. As to quaternary structure, interacts with CUX1 (via DNA-binding domains); the interaction inhibits the attachment of both proteins to DNA. Homodimer. Part of the nuclear protein complex gamma-globin promoter and enhancer binding factor (gamma-PE) composed at least of SATB1 and HOXB2. Interaction with CtBP1 when not acetylated stabilizes attachment to DNA and promotes transcription repression. Interacts with PCAF. Interacts with sumoylated PML and HDAC1 via the CMP domain. Interacts also with DYNLT3 and POLR2J2. Binds to EP300. In terms of assembly, (Microbial infection) Interacts (via the CMP domain) with HIV-1 Tat. Sumoylated. Sumoylation promotes cleavage by caspases. Post-translationally, phosphorylated by PKC. Acetylated by PCAF. Phosphorylated form interacts with HDAC1, but unphosphorylated form interacts with PCAF. DNA binding properties are activated by phosphorylation and inactivated by acetylation. In opposition, gene expression is down-regulated by phosphorylation but up-regulated by acetylation. In terms of processing, cleaved at Asp-254 by caspase-3 and caspase-6 during T-cell apoptosis in thymus and during B-cell stimulation. The cleaved forms cannot dimerize and lose transcription regulation function because of impaired DNA and chromatin association. In terms of tissue distribution, expressed predominantly in thymus.

The protein resides in the nucleus matrix. Its subcellular location is the nucleus. It localises to the PML body. Its function is as follows. Crucial silencing factor contributing to the initiation of X inactivation mediated by Xist RNA that occurs during embryogenesis and in lymphoma. Binds to DNA at special AT-rich sequences, the consensus SATB1-binding sequence (CSBS), at nuclear matrix- or scaffold-associated regions. Thought to recognize the sugar-phosphate structure of double-stranded DNA. Transcriptional repressor controlling nuclear and viral gene expression in a phosphorylated and acetylated status-dependent manner, by binding to matrix attachment regions (MARs) of DNA and inducing a local chromatin-loop remodeling. Acts as a docking site for several chromatin remodeling enzymes (e.g. PML at the MHC-I locus) and also by recruiting corepressors (HDACs) or coactivators (HATs) directly to promoters and enhancers. Modulates genes that are essential in the maturation of the immune T-cell CD8SP from thymocytes. Required for the switching of fetal globin species, and beta- and gamma-globin genes regulation during erythroid differentiation. Plays a role in chromatin organization and nuclear architecture during apoptosis. Interacts with the unique region (UR) of cytomegalovirus (CMV). Alu-like motifs and SATB1-binding sites provide a unique chromatin context which seems preferentially targeted by the HIV-1 integration machinery. Moreover, HIV-1 Tat may overcome SATB1-mediated repression of IL2 and IL2RA (interleukin) in T-cells by binding to the same domain than HDAC1. Delineates specific epigenetic modifications at target gene loci, directly up-regulating metastasis-associated genes while down-regulating tumor-suppressor genes. Reprograms chromatin organization and the transcription profiles of breast tumors to promote growth and metastasis. Promotes neuronal differentiation of neural stem/progenitor cells in the adult subventricular zone, possibly by positively regulating the expression of NEUROD1. The protein is DNA-binding protein SATB1 of Homo sapiens (Human).